The sequence spans 610 residues: UvrABC system protein C (610 aa).

The 79-residue stretch at 16–94 folds into the GIY-YIG domain; that stretch reads NQPGVYRMYD…IKRYQPRYNV (79 aa). The region spanning 204–239 is the UVR domain; sequence SQVIDALVARMEEASRALRFEEAARLRDQIQAVRRV.

It belongs to the UvrC family. In terms of assembly, interacts with UvrB in an incision complex.

Its subcellular location is the cytoplasm. Its function is as follows. The UvrABC repair system catalyzes the recognition and processing of DNA lesions. UvrC both incises the 5' and 3' sides of the lesion. The N-terminal half is responsible for the 3' incision and the C-terminal half is responsible for the 5' incision. The polypeptide is UvrABC system protein C (Edwardsiella ictaluri (strain 93-146)).